We begin with the raw amino-acid sequence, 478 residues long: MPREIITLQVGQCGNQIGTEFWGRLIAEHGIGPDGIVKEFATEGTDRKDVFFYQADDQHYIPRALLIDLEPRVINSLQESEFKNLWNPENVYIDSQGGGAGNNWAVGYTHATEKYEHIMDMIDREDNSDSLEGFVLTHSIAGGTGSGFGSHMLEQLTDRYPKKIIQTYSVFPNDSERSSVVVHPYNSVLALKRLILNADAVVVIDNTSLHRIADERLQLDFASFKETNSIISTVMAASTTTLRYPGYMNNDLVGLIASLVPTPRAHFLMTSFTPLVIKGAQRRIQKTSVLDVMRRLLQPKNIMVSCGTKKGVYVSILDIIRGDVDPTDIHKSLQRIREKKIVNFIPWGPASIQVALSKQSPYANVPYRVSGCMMANHSNLGNLFARIIRTYDILRKRNAFLNVYKETPVFSENLDEFEDAKETITNLIEEYKAIQTSDYINWGMKQQQSQISQKESSSLANENGNGANNKPGKSAMAL.

141–147 (AGGTGSG) provides a ligand contact to GTP. The tract at residues 451-478 (ISQKESSSLANENGNGANNKPGKSAMAL) is disordered. A compositionally biased stretch (polar residues) spans 459-468 (LANENGNGAN).

Belongs to the tubulin family.

It is found in the cytoplasm. Its subcellular location is the cytoskeleton. It localises to the microtubule organizing center. The protein localises to the centrosome. Functionally, tubulin is the major constituent of microtubules. The gamma chain is found at microtubule organizing centers (MTOC) such as the spindle poles or the centrosome, suggesting that it is involved in the minus-end nucleation of microtubule assembly. The polypeptide is Tubulin gamma chain (Reticulomyxa filosa).